The primary structure comprises 145 residues: uncharacterized protein (145 aa).

Residues 1–22 (MLTRLVLSAHLSSTTSPPWTHA) form the signal peptide. The N-linked (GlcNAc...) asparagine glycan is linked to asparagine 98. A disordered region spans residues 103–145 (SSGQQRQAARQEEENSICKAHDSREGRLGYPLSAHQPGSGGPN).

It is found in the secreted. This is an uncharacterized protein from Homo sapiens (Human).